Consider the following 118-residue polypeptide: Large ribosomal subunit protein uL24 (118 aa).

It belongs to the universal ribosomal protein uL24 family. In terms of assembly, part of the 50S ribosomal subunit.

Functionally, one of two assembly initiator proteins, it binds directly to the 5'-end of the 23S rRNA, where it nucleates assembly of the 50S subunit. In terms of biological role, one of the proteins that surrounds the polypeptide exit tunnel on the outside of the subunit. This chain is Large ribosomal subunit protein uL24, found in Prochlorococcus marinus (strain MIT 9215).